An 853-amino-acid chain; its full sequence is DNA (cytosine-5)-methyltransferase 3B (853 aa).

The span at 1–20 (MKGDTRHLNGEEDAGGREDS) shows a compositional bias: basic and acidic residues. A disordered region spans residues 1–218 (MKGDTRHLNG…SGDGDSSEYQ (218 aa)). The segment at 1–298 (MKGDTRHLNG…LATFNKLVSY (298 aa)) is interaction with DNMT1 and DNMT3A. The segment covering 72–81 (GDGDGEDGDG) has biased composition (acidic residues). The residue at position 82 (Ser82) is a Phosphoserine. Residue Lys89 forms a Glycyl lysine isopeptide (Lys-Gly) (interchain with G-Cter in SUMO2) linkage. Thr96 is subject to Phosphothreonine. Phosphoserine is present on residues Ser100 and Ser110. The span at 115–130 (ERHRPSPRSTRGRQGR) shows a compositional bias: basic residues. 4 positions are modified to phosphoserine: Ser136, Ser195, Ser202, and Ser209. The span at 179–199 (GTPQSSSTPYARLAQDSQQGG) shows a compositional bias: polar residues. One can recognise a PWWP domain in the interval 225-283 (IGDLVWGKIKGFSWWPAMVVSWKATSKRQAMSGMRWVQWFGDGKFSEVSADKLVALGLF). Residues 341–423 (KPTGIEGLKP…DQSREQMASD (83 aa)) form a disordered region. 2 stretches are compositionally biased toward basic and acidic residues: residues 368 to 385 (RKLE…RTAD) and 407 to 417 (GKDRGDEDQSR). Arg410 bears the Citrulline mark. The 133-residue stretch at 423–555 (DVANNKSSLE…LQAFFTSDTG (133 aa)) folds into the ADD domain. A GATA-type; atypical zinc finger spans residues 434-464 (GCLSCGRKNPVSFHPLFEGGLCQTCRDRFLE). The tract at residues 435 to 527 (CLSCGRKNPV…LQEPWSCYMC (93 aa)) is interaction with the PRC2/EED-EZH2 complex. Residues 475 to 531 (QSYCTVCCEGRELLLCSNTSCCRCFCVECLEVLVGTGTAAEAKLQEPWSCYMCLPQR) form a PHD-type; atypical zinc finger. In terms of domain architecture, SAM-dependent MTase C5-type spans 575–853 (IRVLSLFDGI…APLKDYFACE (279 aa)). Residues 582 to 586 (DGIAT) and Glu605 each bind S-adenosyl-L-methionine. Residue Lys617 forms a Glycyl lysine isopeptide (Lys-Gly) (interchain with G-Cter in SUMO2) linkage. Residue 627–629 (DVR) coordinates S-adenosyl-L-methionine. Cys651 is an active-site residue. 832–834 (RSW) is an S-adenosyl-L-methionine binding site.

It belongs to the class I-like SAM-binding methyltransferase superfamily. C5-methyltransferase family. Interacts with BAZ2A/TIP5, SUV39H1 and CBX4. Interacts with UHRF1. Interacts with DNMT1 and DNMT3A, SETDB1, UBL1, UBE2I9 and ZHX1. Interacts with the PRC2/EED-EZH2 complex. Sumoylated. Post-translationally, citrullinated by PADI4. In terms of tissue distribution, ubiquitous; highly expressed in fetal liver, heart, kidney, placenta, and at lower levels in spleen, colon, brain, liver, small intestine, lung, peripheral blood mononuclear cells, and skeletal muscle. Isoform 1 is expressed in all tissues except brain, skeletal muscle and PBMC, 3 is ubiquitous, 4 is expressed in all tissues except brain, skeletal muscle, lung and prostate and 5 is detectable only in testis and at very low level in brain and prostate.

It localises to the nucleus. The catalysed reaction is a 2'-deoxycytidine in DNA + S-adenosyl-L-methionine = a 5-methyl-2'-deoxycytidine in DNA + S-adenosyl-L-homocysteine + H(+). Its activity is regulated as follows. Activated by binding to the regulatory factor DNMT3L. In terms of biological role, required for genome-wide de novo methylation and is essential for the establishment of DNA methylation patterns during development. DNA methylation is coordinated with methylation of histones. May preferentially methylates nucleosomal DNA within the nucleosome core region. May function as transcriptional co-repressor by associating with CBX4 and independently of DNA methylation. Seems to be involved in gene silencing. In association with DNMT1 and via the recruitment of CTCFL/BORIS, involved in activation of BAG1 gene expression by modulating dimethylation of promoter histone H3 at H3K4 and H3K9. Isoforms 4 and 5 are probably not functional due to the deletion of two conserved methyltransferase motifs. Functions as a transcriptional corepressor by associating with ZHX1. Required for DUX4 silencing in somatic cells. This Homo sapiens (Human) protein is DNA (cytosine-5)-methyltransferase 3B (DNMT3B).